Reading from the N-terminus, the 270-residue chain is Small ribosomal subunit protein eS1 (270 aa).

Disordered regions lie at residues 1–20 (MAVG…SKKK) and 238–270 (GGGK…QESV).

Belongs to the eukaryotic ribosomal protein eS1 family. Component of the small ribosomal subunit. Mature ribosomes consist of a small (40S) and a large (60S) subunit. The 40S subunit contains about 33 different proteins and 1 molecule of RNA (18S). The 60S subunit contains about 49 different proteins and 3 molecules of RNA (28S, 5.8S and 5S).

Its subcellular location is the cytoplasm. The polypeptide is Small ribosomal subunit protein eS1 (Culex quinquefasciatus (Southern house mosquito)).